The primary structure comprises 189 residues: Interferon alpha-17 (189 aa).

The signal sequence occupies residues 1 to 23 (MALSFSLLMAVLVLSYKSICSLG). Intrachain disulfides connect C24–C122 and C52–C162.

This sequence belongs to the alpha/beta interferon family.

It is found in the secreted. Functionally, produced by macrophages, IFN-alpha have antiviral activities. Interferon stimulates the production of two enzymes: a protein kinase and an oligoadenylate synthetase. This is Interferon alpha-17 (IFNA17) from Homo sapiens (Human).